Here is a 149-residue protein sequence, read N- to C-terminus: Glucosamine 6-phosphate N-acetyltransferase (149 aa).

In terms of domain architecture, N-acetyltransferase spans 5–149; that stretch reads FKIRKLEISD…KSIQMSKYFD (145 aa). Substrate-binding positions include threonine 27, 75 to 78, and 87 to 89; these read KFLR and EDV. 97 to 102 serves as a coordination point for acetyl-CoA; that stretch reads GKQLGK. Substrate is bound at residue 118 to 119; it reads YK. 132-134 contributes to the acetyl-CoA binding site; that stretch reads YEK.

Belongs to the acetyltransferase family. GNA1 subfamily. As to quaternary structure, homodimer. As to expression, expressed in roots, leaves, stems, cauline leaves, flowers and siliques.

The protein resides in the endoplasmic reticulum membrane. It catalyses the reaction D-glucosamine 6-phosphate + acetyl-CoA = N-acetyl-D-glucosamine 6-phosphate + CoA + H(+). The protein operates within nucleotide-sugar biosynthesis; UDP-N-acetyl-alpha-D-glucosamine biosynthesis; N-acetyl-alpha-D-glucosamine 1-phosphate from alpha-D-glucosamine 6-phosphate (route I): step 1/2. Its function is as follows. Acetyltransferase involved in UDP-N-acetylglucosamine (UDP-GlcNAc) biosynthesis. UDP-GlcNAc is an essential metabolite that serves as an initial sugar donor for N-glycan synthesis and thus plays an important role in protein and lipid glycosylation. The sequence is that of Glucosamine 6-phosphate N-acetyltransferase (GNA1) from Arabidopsis thaliana (Mouse-ear cress).